The chain runs to 118 residues: Large ribosomal subunit protein uL24 (118 aa).

Belongs to the universal ribosomal protein uL24 family. In terms of assembly, part of the 50S ribosomal subunit.

Functionally, one of two assembly initiator proteins, it binds directly to the 5'-end of the 23S rRNA, where it nucleates assembly of the 50S subunit. One of the proteins that surrounds the polypeptide exit tunnel on the outside of the subunit. The sequence is that of Large ribosomal subunit protein uL24 from Prochlorococcus marinus (strain NATL1A).